A 330-amino-acid polypeptide reads, in one-letter code: Tyrosine-protein phosphatase yvh1 (330 aa).

One can recognise a Tyrosine-protein phosphatase domain in the interval 45–187 (NDLSEISKNL…LRVYFECNYQ (143 aa)). Catalysis depends on Cys131, which acts as the Phosphocysteine intermediate.

Belongs to the protein-tyrosine phosphatase family. Non-receptor class dual specificity subfamily.

It localises to the cytoplasm. Its subcellular location is the nucleus. The catalysed reaction is O-phospho-L-tyrosyl-[protein] + H2O = L-tyrosyl-[protein] + phosphate. In terms of biological role, may be directly involved in signal transduction and/or cell cycle regulation. It is necessary for maintaining growth rate or spore germination. Could show both activity toward tyrosine-protein phosphate as well as with serine-protein phosphate. This Schizosaccharomyces pombe (strain 972 / ATCC 24843) (Fission yeast) protein is Tyrosine-protein phosphatase yvh1 (yvh1).